Reading from the N-terminus, the 1061-residue chain is Translation initiation factor IF-2 (1061 aa).

2 disordered regions span residues 51–199 (FARG…VAVK) and 250–460 (AFQA…IPTE). Residues 67–77 (NEPKPKIDWSR) are compositionally biased toward basic and acidic residues. Composition is skewed to low complexity over residues 97–113 (VAAA…KAPV), 120–130 (RPSAPRPAVTA), 167–177 (VPQPRQPSAVV), 184–199 (TPAI…VAVK), and 250–278 (AFQA…AEAP). Residues 279–291 (PVAPEKPAVPAPP) show a composition bias toward pro residues. Residues 340–360 (SPGGPGGPGGGYGQRPSGPGG) are compositionally biased toward gly residues. Positions 381–391 (GFNNGPRPGFG) are enriched in low complexity. Residues 392-405 (QRPGGFGQRPGMGA) are compositionally biased toward gly residues. A tr-type G domain is found at 552–728 (SRPPVVTVMG…CLVADLGNLK (177 aa)). Residues 561–568 (GHVDHGKT) form a G1 region. 561–568 (GHVDHGKT) contributes to the GTP binding site. Residues 586 to 590 (GITQH) form a G2 region. The interval 614-617 (DTPG) is G3. Residues 614–618 (DTPGH) and 668–671 (NKID) contribute to the GTP site. The tract at residues 668 to 671 (NKID) is G4. A G5 region spans residues 704–706 (SAK).

This sequence belongs to the TRAFAC class translation factor GTPase superfamily. Classic translation factor GTPase family. IF-2 subfamily.

The protein resides in the cytoplasm. Its function is as follows. One of the essential components for the initiation of protein synthesis. Protects formylmethionyl-tRNA from spontaneous hydrolysis and promotes its binding to the 30S ribosomal subunits. Also involved in the hydrolysis of GTP during the formation of the 70S ribosomal complex. This Acidobacterium capsulatum (strain ATCC 51196 / DSM 11244 / BCRC 80197 / JCM 7670 / NBRC 15755 / NCIMB 13165 / 161) protein is Translation initiation factor IF-2.